A 941-amino-acid polypeptide reads, in one-letter code: Isoleucine--tRNA ligase (941 aa).

Residues 69–79 carry the 'HIGH' region motif; sequence PYANGDIHIGH. Residue Glu589 participates in L-isoleucyl-5'-AMP binding. The 'KMSKS' region motif lies at 630–634; the sequence is KMSKS. Lys633 is a binding site for ATP. Zn(2+) is bound by residues Cys915, Cys918, Cys932, and Cys935.

This sequence belongs to the class-I aminoacyl-tRNA synthetase family. IleS type 1 subfamily. In terms of assembly, monomer. Zn(2+) serves as cofactor.

It is found in the cytoplasm. It carries out the reaction tRNA(Ile) + L-isoleucine + ATP = L-isoleucyl-tRNA(Ile) + AMP + diphosphate. Its function is as follows. Catalyzes the attachment of isoleucine to tRNA(Ile). As IleRS can inadvertently accommodate and process structurally similar amino acids such as valine, to avoid such errors it has two additional distinct tRNA(Ile)-dependent editing activities. One activity is designated as 'pretransfer' editing and involves the hydrolysis of activated Val-AMP. The other activity is designated 'posttransfer' editing and involves deacylation of mischarged Val-tRNA(Ile). The polypeptide is Isoleucine--tRNA ligase (Zymomonas mobilis subsp. mobilis (strain ATCC 31821 / ZM4 / CP4)).